Reading from the N-terminus, the 115-residue chain is Large ribosomal subunit protein mL60 (115 aa).

A mitochondrion-targeting transit peptide spans 1 to 23 (MLGAFNSTLARFGGLVHKVPWRL). The tract at residues 88-115 (AGLQGFRKGVHKSPKWTRSTNRVNPTGF) is disordered. The span at 103-115 (WTRSTNRVNPTGF) shows a compositional bias: polar residues.

This sequence belongs to the mitochondrion-specific ribosomal protein mL60 family. In terms of assembly, component of the mitochondrial large ribosomal subunit (mt-LSU). Mature yeast 74S mitochondrial ribosomes consist of a small (37S) and a large (54S) subunit. The 37S small subunit contains a 15S ribosomal RNA (15S mt-rRNA) and at least 32 different proteins. The 54S large subunit contains a 21S rRNA (21S mt-rRNA) and at least 45 different proteins.

It is found in the mitochondrion. Functionally, component of the mitochondrial ribosome (mitoribosome), a dedicated translation machinery responsible for the synthesis of mitochondrial genome-encoded proteins, including at least some of the essential transmembrane subunits of the mitochondrial respiratory chain. The mitoribosomes are attached to the mitochondrial inner membrane and translation products are cotranslationally integrated into the membrane. The protein is Large ribosomal subunit protein mL60 (mrpl31) of Schizosaccharomyces pombe (strain 972 / ATCC 24843) (Fission yeast).